A 962-amino-acid chain; its full sequence is Glycine dehydrogenase (decarboxylating) (962 aa).

At Lys-710 the chain carries N6-(pyridoxal phosphate)lysine.

The protein belongs to the GcvP family. In terms of assembly, the glycine cleavage system is composed of four proteins: P, T, L and H. The cofactor is pyridoxal 5'-phosphate.

It carries out the reaction N(6)-[(R)-lipoyl]-L-lysyl-[glycine-cleavage complex H protein] + glycine + H(+) = N(6)-[(R)-S(8)-aminomethyldihydrolipoyl]-L-lysyl-[glycine-cleavage complex H protein] + CO2. The glycine cleavage system catalyzes the degradation of glycine. The P protein binds the alpha-amino group of glycine through its pyridoxal phosphate cofactor; CO(2) is released and the remaining methylamine moiety is then transferred to the lipoamide cofactor of the H protein. This chain is Glycine dehydrogenase (decarboxylating), found in Idiomarina loihiensis (strain ATCC BAA-735 / DSM 15497 / L2-TR).